Reading from the N-terminus, the 348-residue chain is Putative S-adenosyl-L-methionine-dependent methyltransferase MRA_3439 (348 aa).

S-adenosyl-L-methionine-binding positions include Asp171 and Asp200 to Leu201.

Belongs to the UPF0677 family.

Functionally, exhibits S-adenosyl-L-methionine-dependent methyltransferase activity. The sequence is that of Putative S-adenosyl-L-methionine-dependent methyltransferase MRA_3439 from Mycobacterium tuberculosis (strain ATCC 25177 / H37Ra).